The primary structure comprises 212 residues: Adenine phosphoribosyltransferase (212 aa).

It belongs to the purine/pyrimidine phosphoribosyltransferase family. As to quaternary structure, homodimer.

It is found in the cytoplasm. The catalysed reaction is AMP + diphosphate = 5-phospho-alpha-D-ribose 1-diphosphate + adenine. It participates in purine metabolism; AMP biosynthesis via salvage pathway; AMP from adenine: step 1/1. Catalyzes a salvage reaction resulting in the formation of AMP, that is energically less costly than de novo synthesis. The chain is Adenine phosphoribosyltransferase from Mycobacterium tuberculosis (strain ATCC 25618 / H37Rv).